The primary structure comprises 547 residues: Chaperonin GroEL (547 aa).

ATP is bound by residues Thr-30–Pro-33, Lys-51, Asp-87–Thr-91, Gly-415, Asn-479–Ala-481, and Asp-495. The interval Lys-526–Met-547 is disordered. Gly residues predominate over residues Gly-538–Met-547.

Belongs to the chaperonin (HSP60) family. As to quaternary structure, forms a cylinder of 14 subunits composed of two heptameric rings stacked back-to-back. Interacts with the co-chaperonin GroES.

The protein localises to the cytoplasm. It carries out the reaction ATP + H2O + a folded polypeptide = ADP + phosphate + an unfolded polypeptide.. Together with its co-chaperonin GroES, plays an essential role in assisting protein folding. The GroEL-GroES system forms a nano-cage that allows encapsulation of the non-native substrate proteins and provides a physical environment optimized to promote and accelerate protein folding. The chain is Chaperonin GroEL from Buchnera aphidicola subsp. Tetraneura caerulescens.